A 1463-amino-acid polypeptide reads, in one-letter code: MNTQEKHQFEPVLPQAHDDPTLSKPPIFFNRTADKGMIKRLIAWFLVHYGLADTVSMIEDLKQVGFQYATRAGISLGIEDLRIPPTKPRLLQEAHREINRMEFRYQQGYVSLVERFQKVIDTWNGTSELLKDDVVENFLATDPLNPVYMMAFSGARGNLSQVRQLVGMRGLMSNPQGEIIDLPIRSNFREGLTVTEYIISCYGARKGLVDTALRTANSGYLTRRLVDVAQDIVIRMTSCSPSAYPLISFTKSGKEVVYPLEERLLGRVLAIGAFNQEGELISGPDTAISQEIAVQLMDCDPKEILVRSVLLCKSKRGLCRLCYGWNLGTGTIVSIGEAVGIIAAQSIGEPGTQLTMRTFHTGGVFAGGVTNEIRAPHAGLVHYPRPIHPKWVRTRHGQFGILISEKIEIIFEHESKKTIQVFDAGTVLTIHEGEKVHTNQLIGEIPAHGTLVTGWRSLKSGVDGEVRFDELELLKQRPRSDRTSPVRLDPRVCNKAHLWILQGHVNTFEMPIQLVANIGDKVEKDSIVSTTKQVVSEEGRIIYRYDEKRGKEQTIITHAFGSVQFDGVDAWLPTKSQGIKQSIRTTGGKLSISSQGMTLSATKIKQEGIGSFDWPALAEPSIEEDEELEEAYKKTKDPIIQPTPYPLQYCVLPEQKYVIQAQEGWIISVLGGQSVGASQSLATYVDSQWEVEQGQLSIRSIEYRVHDQSWIQVITPSLVEIESGRGSYHLMAKAGWIIPISTKIRCKDYRLISGSILLGKWSLPISRFAVEQAASYPAILIRPIHTYPVYPTTIWDETINWQRGIASIGSNDWHPRCIAPTYQAPSYVESFKGRQTFTGEEKQEGNKPVEITSKNRRKSAANSSHETRMTQNRTWPIVLADTRIQKGASPIQIEWTWPHAKNPWISPNHGAIAGHIRFVNMTILDSSSISTKQELDHREAQVIPTTQTVSGVHRLTPLLEKTVFSQDDGEIQRMLPFSRALVKPVRTNRSKTRRNASGKTQVKAQARSQAKARSVRLKLKETVKTRSQEKFTNEMKKQLAKSSEGNKGFQIRQALFPKKLIRLMVVLRPVDIMTFATYGARVCIPLGAMIYQGEELFEGASTPISGQLIEIRRDRVTLRIGQPYRVGWQSRLMVTRDQIVKAEKVLAHLLYFKTKTGDIVQGLPKIEEILEARRKKGNEIIRSNLQDFVQQFYQDNLDEGFSRKYASTRTMRAMQVLILRRVQLVYRSQGVQISDKHLEIISLRMTSRVLVEKAYGTGILPGEIIEKRRADMLNQGRTRIRYCPIVLGITKASLTTKGFISSASFQETTRVLTQAVLQGKSDWLLGLKENVILGRLIPAGVGIYGHWVGPHEFNIKQMLKLWVLPPIITGQSTMRAMFHSTTRYWQDLEAVMESPNKLYPVTPYKCYPDTQHLAGLSIWMPEFEFRRFETFTEEEMVAAESLFTAHPNCHARRINNKQLNSLI.

4 residues coordinate Zn(2+): Cys-239, Cys-312, Cys-319, and Cys-322. Disordered stretches follow at residues 836–869 and 987–1007; these read TFTG…ETRM and TNRS…AQAR. A compositionally biased stretch (polar residues) spans 860 to 869; the sequence is AANSSHETRM. Residues 987-996 are compositionally biased toward basic residues; the sequence is TNRSKTRRNA. Residues 997-1007 are compositionally biased toward polar residues; that stretch reads SGKTQVKAQAR.

It belongs to the RNA polymerase beta' chain family. RpoC2 subfamily. In plastids the minimal PEP RNA polymerase catalytic core is composed of four subunits: alpha, beta, beta', and beta''. When a (nuclear-encoded) sigma factor is associated with the core the holoenzyme is formed, which can initiate transcription. It depends on Zn(2+) as a cofactor.

It localises to the plastid. The protein resides in the chloroplast. It catalyses the reaction RNA(n) + a ribonucleoside 5'-triphosphate = RNA(n+1) + diphosphate. In terms of biological role, DNA-dependent RNA polymerase catalyzes the transcription of DNA into RNA using the four ribonucleoside triphosphates as substrates. This Nephroselmis olivacea (Green alga) protein is DNA-directed RNA polymerase subunit beta''.